We begin with the raw amino-acid sequence, 133 residues long: Small ribosomal subunit protein uS19 (133 aa).

This sequence belongs to the universal ribosomal protein uS19 family.

In terms of biological role, protein S19 forms a complex with S13 that binds strongly to the 16S ribosomal RNA. The polypeptide is Small ribosomal subunit protein uS19 (Thermococcus sibiricus (strain DSM 12597 / MM 739)).